The following is a 233-amino-acid chain: Octanoyltransferase (233 aa).

The 184-residue stretch at 33-216 (GRAQDTVILL…HLVRALSSNG (184 aa)) folds into the BPL/LPL catalytic domain. Substrate-binding positions include 71-78 (RGGRITWH), 146-148 (AIG), and 159-161 (GFA). Cysteine 177 serves as the catalytic Acyl-thioester intermediate.

The protein belongs to the LipB family.

The protein resides in the cytoplasm. The catalysed reaction is octanoyl-[ACP] + L-lysyl-[protein] = N(6)-octanoyl-L-lysyl-[protein] + holo-[ACP] + H(+). It participates in protein modification; protein lipoylation via endogenous pathway; protein N(6)-(lipoyl)lysine from octanoyl-[acyl-carrier-protein]: step 1/2. Functionally, catalyzes the transfer of endogenously produced octanoic acid from octanoyl-acyl-carrier-protein onto the lipoyl domains of lipoate-dependent enzymes. Lipoyl-ACP can also act as a substrate although octanoyl-ACP is likely to be the physiological substrate. The protein is Octanoyltransferase of Clavibacter michiganensis subsp. michiganensis (strain NCPPB 382).